Consider the following 119-residue polypeptide: Ribonuclease P protein component (119 aa).

Belongs to the RnpA family. As to quaternary structure, consists of a catalytic RNA component (M1 or rnpB) and a protein subunit.

The enzyme catalyses Endonucleolytic cleavage of RNA, removing 5'-extranucleotides from tRNA precursor.. Functionally, RNaseP catalyzes the removal of the 5'-leader sequence from pre-tRNA to produce the mature 5'-terminus. It can also cleave other RNA substrates such as 4.5S RNA. The protein component plays an auxiliary but essential role in vivo by binding to the 5'-leader sequence and broadening the substrate specificity of the ribozyme. This is Ribonuclease P protein component from Pediococcus pentosaceus (strain ATCC 25745 / CCUG 21536 / LMG 10740 / 183-1w).